We begin with the raw amino-acid sequence, 501 residues long: Flagellin (501 aa).

It belongs to the bacterial flagellin family.

The protein resides in the secreted. It is found in the bacterial flagellum. In terms of biological role, flagellin is the subunit protein which polymerizes to form the filaments of bacterial flagella. The protein is Flagellin (fliC) of Salmonella choleraesuis (strain SC-B67).